A 698-amino-acid chain; its full sequence is Effector protein AvrPphDPgy (698 aa).

Residues 1 to 15 show a composition bias toward polar residues; it reads MNPLRSIQHNITTPP. 2 disordered regions span residues 1-36 and 171-200; these read MNPL…HPKR and VDSS…DSDS. Residues 172–181 are compositionally biased toward low complexity; sequence DSSSPLLSSP.

It is found in the secreted. Effector protein involved in non-host recognition. The chain is Effector protein AvrPphDPgy (avrPphDPgy) from Pseudomonas savastanoi pv. glycinea (Pseudomonas syringae pv. glycinea).